A 363-amino-acid chain; its full sequence is MFTRRFIPVVQSTKQNIGKYVRKDARFTLLTYNMLSPSYMWPQVYTYVAEPYKNWSYRHRLLEKELLNTFKADIMCLQEMTARDYEDYWHDSIGVDVNYGSKFISKTPPKYWKKPVKDMDGVSIFYNLAKFDFISSSGIYLNQLLNVFNQRELKYLYNKKVTLTDGASNVIGEDSLLDVLKGKNQVCLFVSLRHKETGTIFVVLNTHLYWKYDEVKLTQCMIIMRELSKIIKQLLPGDVKGQERVKILFTGDLNSTRDSLVVNFLQGQIVSHGDLNLINPMRPYLDRCVYDDIPKDYFVHTCYSGKLKGIFDYVWYHDSDFLLTKILTGNEVSDELLASNQLGLPNENHPSDHIPLLTEFKIL.

The N-terminal 23 residues, 1 to 23 (MFTRRFIPVVQSTKQNIGKYVRK), are a transit peptide targeting the mitochondrion.

Belongs to the CCR4/nocturin family.

The protein localises to the mitochondrion. The polypeptide is RNA exonuclease NGL1 (NGL1) (Saccharomyces cerevisiae (strain ATCC 204508 / S288c) (Baker's yeast)).